The primary structure comprises 513 residues: Maturase K (513 aa).

The protein belongs to the intron maturase 2 family. MatK subfamily.

It localises to the plastid. The protein localises to the chloroplast. Functionally, usually encoded in the trnK tRNA gene intron. Probably assists in splicing its own and other chloroplast group II introns. In Keckiella cordifolia (Heart-leafed penstemon), this protein is Maturase K.